The primary structure comprises 187 residues: Protein GrpE (187 aa).

The interval 1–25 (MADEQNLDNRAPEETPAAEGTSAGE) is disordered.

The protein belongs to the GrpE family. In terms of assembly, homodimer.

Its subcellular location is the cytoplasm. Its function is as follows. Participates actively in the response to hyperosmotic and heat shock by preventing the aggregation of stress-denatured proteins, in association with DnaK and GrpE. It is the nucleotide exchange factor for DnaK and may function as a thermosensor. Unfolded proteins bind initially to DnaJ; upon interaction with the DnaJ-bound protein, DnaK hydrolyzes its bound ATP, resulting in the formation of a stable complex. GrpE releases ADP from DnaK; ATP binding to DnaK triggers the release of the substrate protein, thus completing the reaction cycle. Several rounds of ATP-dependent interactions between DnaJ, DnaK and GrpE are required for fully efficient folding. In Azotobacter vinelandii (strain DJ / ATCC BAA-1303), this protein is Protein GrpE.